Consider the following 417-residue polypeptide: Phosphoglycerate kinase 1 (417 aa).

Ser2 is modified (N-acetylserine). Ser2 and Ser4 each carry phosphoserine. At Lys6 the chain carries N6-succinyllysine. N6-acetyllysine is present on Lys11. Val23, Asp24, Phe25, Asn26, Gln38, and Arg39 together coordinate (2R)-3-phosphoglycerate. The tract at residues 38 to 43 (QRIKAA) is mitochondrial targeting region exposed following cis-trans isomerization by PIN1 and recognized by the TOM complex for mitochondrial translocation of the protein. Lys48 carries the post-translational modification N6-acetyllysine; alternate. Lys48 is modified (N6-succinyllysine; alternate). Residues Ser62, His63, Gly65, and Arg66 each contribute to the (2R)-3-phosphoglycerate site. Lys75 carries the post-translational modification N6-acetyllysine. At Tyr76 the chain carries Phosphotyrosine. An N6-acetyllysine mark is found at Lys86 and Lys91. Lys97 carries the post-translational modification N6-acetyllysine; alternate. Position 97 is an N6-(2-hydroxyisobutyryl)lysine; alternate (Lys97). The (2R)-3-phosphoglycerate site is built by Leu122 and Arg123. The residue at position 131 (Lys131) is an N6-acetyllysine; alternate. Lys131 is modified (N6-malonyllysine; alternate). Lys146 carries the N6-acetyllysine modification. (2R)-3-phosphoglycerate is bound by residues His170 and Arg171. Position 191 is an N6-succinyllysine (Lys191). Tyr196 is subject to Phosphotyrosine. Lys199 is modified (N6-acetyllysine). Ser203 is modified (phosphoserine). Residue Gly214 participates in ADP binding. Gly214 contacts CDP. Residues Ala215 and Lys216 each coordinate AMP. ATP is bound at residue Ala215. Ala215 serves as a coordination point for Mg(2+). At Lys216 the chain carries N6-(2-hydroxyisobutyryl)lysine. Positions 218 and 219 each coordinate Mg(2+). Asp219 serves as a coordination point for CDP. AMP is bound at residue Lys220. Lys220 is a binding site for ATP. Lys220 carries the post-translational modification N6-(2-hydroxyisobutyryl)lysine. Gly238 is an ADP binding site. Gly238 serves as a coordination point for CDP. AMP is bound at residue Gly239. Gly239 lines the ATP pocket. N6-acetyllysine occurs at positions 267 and 291. Gly313 contacts AMP. Residue Gly313 participates in ATP binding. Position 323 is an N6-(2-hydroxyisobutyryl)lysine (Lys323). Residues Gly338, Val340, and Phe343 each coordinate CDP. Phe343 contributes to the ADP binding site. Glu344 serves as a coordination point for AMP. Glu344 provides a ligand contact to ATP. An N6-acetyllysine modification is found at Lys361. Positions 375 and 376 each coordinate ATP. Mg(2+) is bound at residue Asp375.

It belongs to the phosphoglycerate kinase family. In terms of assembly, monomer. Interacts with kinase MAPK1/ERK2; the interaction is direct, occurs under hypoxic conditions, and promotes its interaction with PIN1. Interacts with peptidyl-prolyl cis-trans isomerase PIN1; the interaction is direct, occurs under hypoxic conditions, and targets the protein to the mitochondrion by promoting interactions with the TOM complex. Interacts with mitochondrial circRNA mcPGK1 (via its 2nd stem-loop); the interaction is direct and targets the protein to the mitochondrion by promoting interactions with the TOM complex. Interacts with pyruvate dehydrogenase kinase PDK1; the interaction is direct, occurs under hypoxic conditions and leads to PDK1-mediated inhibition of pyruvate dehydrogenase complex activity. Mg(2+) is required as a cofactor. Post-translationally, phosphorylated at Ser-203 by MAPK1/ERK2 under hypoxic conditions, which promotes its mitochondrial targeting.

The protein resides in the cytoplasm. Its subcellular location is the cytosol. It is found in the mitochondrion matrix. The enzyme catalyses (2R)-3-phosphoglycerate + ATP = (2R)-3-phospho-glyceroyl phosphate + ADP. It carries out the reaction L-seryl-[protein] + ATP = O-phospho-L-seryl-[protein] + ADP + H(+). It functions in the pathway carbohydrate degradation; glycolysis; pyruvate from D-glyceraldehyde 3-phosphate: step 2/5. Functionally, catalyzes one of the two ATP producing reactions in the glycolytic pathway via the reversible conversion of 1,3-diphosphoglycerate to 3-phosphoglycerate. Both L- and D- forms of purine and pyrimidine nucleotides can be used as substrates, but the activity is much lower on pyrimidines. In addition to its role as a glycolytic enzyme, it seems that PGK-1 acts as a polymerase alpha cofactor protein (primer recognition protein). Acts as a protein kinase when localized to the mitochondrion where it phosphorylates pyruvate dehydrogenase kinase PDK1 to inhibit pyruvate dehydrogenase complex activity and suppress the formation of acetyl-coenzyme A from pyruvate, and consequently inhibit oxidative phosphorylation and promote glycolysis. May play a role in sperm motility. This chain is Phosphoglycerate kinase 1 (PGK1), found in Macaca fascicularis (Crab-eating macaque).